Here is a 156-residue protein sequence, read N- to C-terminus: MEDLEEENFSLSVSSPKDAEFDNVVGHLEDIIMDDEFQLLQHGFMDKHYHEFEDTEENKLTYTTIFNEYIGLVEKYIEEQLLQRIPAFDMSAFTSSLQCHREEIAGDIFDILLTFTDFLAFKEMFLDYKAEKEGRTVDLGCGLVVTSLMSSSISSS.

It belongs to the ARL2BP family.

It is found in the cytoplasm. Its subcellular location is the mitochondrion intermembrane space. The protein resides in the cytoskeleton. The protein localises to the microtubule organizing center. It localises to the centrosome. It is found in the nucleus. Its subcellular location is the spindle. The protein resides in the cilium basal body. Its function is as follows. Plays a role as an effector of the ADP-ribosylation factor-like protein 2, ARL2. In Xenopus laevis (African clawed frog), this protein is ADP-ribosylation factor-like protein 2-binding protein (arl2bp).